The following is a 150-amino-acid chain: Large ribosomal subunit protein bL9 (150 aa).

The protein belongs to the bacterial ribosomal protein bL9 family.

Functionally, binds to the 23S rRNA. The protein is Large ribosomal subunit protein bL9 of Shewanella putrefaciens (strain CN-32 / ATCC BAA-453).